A 566-amino-acid chain; its full sequence is Alpha-keto-acid decarboxylase (566 aa).

Glutamate 61 serves as a coordination point for thiamine diphosphate. Residues 396–478 are thiamine pyrophosphate binding; the sequence is TSFYGMADHR…VVVNNDGYTV (83 aa). Mg(2+) is bound by residues aspartate 446, asparagine 473, and glycine 475.

The protein belongs to the TPP enzyme family. Requires a metal cation as cofactor. The cofactor is thiamine diphosphate.

Functionally, decarboxylates branched-chain and aromatic alpha-keto acids to aldehydes. The polypeptide is Alpha-keto-acid decarboxylase (kdc) (Mycobacterium ulcerans (strain Agy99)).